A 517-amino-acid polypeptide reads, in one-letter code: FAD-dependent monooxygenase dmxR9 (517 aa).

Residues V96 and R162 each coordinate FAD. Catalysis depends on residues R243 and Y270. Residues D365 and A378 each coordinate FAD.

Belongs to the paxM FAD-dependent monooxygenase family. FAD serves as cofactor.

It functions in the pathway secondary metabolite biosynthesis. Its function is as follows. FAD-dependent monooxygenase; part of the gene cluster that mediates the biosynthesis of the dimeric xanthones cryptosporioptides. The pathway begins with the synthesis of atrochrysone thioester by the polyketide synthase dmx-nrPKS. The atrochrysone carboxyl ACP thioesterase dmxR1 then breaks the thioester bond and releases the atrochrysone carboxylic acid from dmx-nrPKS. Atrochrysone carboxylic acid is decarboxylated by the decarboxylase dmxR15, and oxidized by the anthrone oxygenase dmxR16 to yield emodin. Emodin is then reduced to emodin hydroquinone by the oxidoreductase dmxR7. A-ring reduction by the short chain dehydrogenase dmxR18, dehydration by the scytalone dehydratase-like protein dmxR17 and probable spontaneous re-oxidation, results in overall deoxygenation to chrysophanol. Baeyer-Villiger oxidation by the Baeyer-Villiger monooxygenase (BVMO) dmxR6 then yields monodictylactone in equilibrium with monodictyphenone. In the case of the cryptosporioptides biosynthesis, monodictylactone is reduced at C-12 to an alcohol (by the short chain dehydrogenases dmxR12 or dmxR8) and hydroxylated at C-5 by dmxR9, yielding the electron-rich aromatic which could eliminate H(2)O to form the ortho-quinonemethide, followed by tautomerisation to paraquinone and complete the formal reduction to produce the 10-methylgroup. Conjugate addition of C-4a-OH to the resulting paraquinone by the monooxygenase dmxR10 then gives cyclohexadienone, which is then reduced at C-5 by the short chain dehydrogenase dmxR3 to give the dihydroxanthone. The 6,7-epoxide in the cryptosporioptides could be introduced by the cytochrome P450 monooxygenase dmxL3. The highly reducing PKS dmxL2 manufactures butyrate, which is further carboxylated by dmxL1 to form ethylmalonate. It is not yet clear whether the carboxylation occurs while the butyrate is attached to the ACP of dmxL2, but this unusual fungal metabolite could then be esterified to O-5 by the O-acetyltransferase dmxR13. Finally, dimerization performed by dmxR5 gives the observed dimers cryptosporioptides A, B and C as the final products of the pathway. The chain is FAD-dependent monooxygenase dmxR9 from Cryptosporiopsis sp. (strain 8999).